The primary structure comprises 307 residues: uncharacterized protein (307 aa).

The 229-residue stretch at 5–233 (VQTNGLTKTY…NTEYIELVTP (229 aa)) folds into the ABC transporter domain. Residue 37 to 44 (GPNGAGKT) participates in ATP binding.

This sequence belongs to the ABC transporter superfamily.

This is an uncharacterized protein from Bacillus subtilis (strain 168).